The following is a 404-amino-acid chain: Cysteine desulfurase IscS (404 aa).

Pyridoxal 5'-phosphate-binding positions include 75–76 (AT), N155, Q183, and 203–205 (SAH). Residue K206 is modified to N6-(pyridoxal phosphate)lysine. Pyridoxal 5'-phosphate is bound at residue T243. Residue C328 is the Cysteine persulfide intermediate of the active site. Position 328 (C328) interacts with [2Fe-2S] cluster.

It belongs to the class-V pyridoxal-phosphate-dependent aminotransferase family. NifS/IscS subfamily. As to quaternary structure, homodimer. Forms a heterotetramer with IscU, interacts with other sulfur acceptors. Pyridoxal 5'-phosphate is required as a cofactor.

Its subcellular location is the cytoplasm. The catalysed reaction is (sulfur carrier)-H + L-cysteine = (sulfur carrier)-SH + L-alanine. The protein operates within cofactor biosynthesis; iron-sulfur cluster biosynthesis. In terms of biological role, master enzyme that delivers sulfur to a number of partners involved in Fe-S cluster assembly, tRNA modification or cofactor biosynthesis. Catalyzes the removal of elemental sulfur atoms from cysteine to produce alanine. Functions as a sulfur delivery protein for Fe-S cluster synthesis onto IscU, an Fe-S scaffold assembly protein, as well as other S acceptor proteins. This chain is Cysteine desulfurase IscS, found in Pseudomonas aeruginosa (strain LESB58).